Here is a 432-residue protein sequence, read N- to C-terminus: Glutamate-1-semialdehyde 2,1-aminomutase (432 aa).

Lys267 is subject to N6-(pyridoxal phosphate)lysine.

This sequence belongs to the class-III pyridoxal-phosphate-dependent aminotransferase family. HemL subfamily. Homodimer. Pyridoxal 5'-phosphate is required as a cofactor.

The protein resides in the cytoplasm. It carries out the reaction (S)-4-amino-5-oxopentanoate = 5-aminolevulinate. It participates in porphyrin-containing compound metabolism; protoporphyrin-IX biosynthesis; 5-aminolevulinate from L-glutamyl-tRNA(Glu): step 2/2. The protein is Glutamate-1-semialdehyde 2,1-aminomutase of Rhodococcus erythropolis (strain PR4 / NBRC 100887).